The following is a 316-amino-acid chain: Bifunctional peptidase and (3S)-lysyl hydroxylase JMJD7 (316 aa).

One can recognise a JmjC domain in the interval 128-307 (VQKQCSNLPS…LKYSYFQLLD (180 aa)). Fe cation is bound by residues H178, D180, and H277.

Homodimer; disulfide-linked. Interacts with DRG1 and DRG2. Fe(2+) serves as cofactor.

The protein resides in the nucleus. It localises to the cytoplasm. The enzyme catalyses L-lysyl-[protein] + 2-oxoglutarate + O2 = (3S)-3-hydroxy-L-lysyl-[protein] + succinate + CO2. In terms of biological role, bifunctional enzyme that acts both as an endopeptidase and 2-oxoglutarate-dependent monooxygenase. Endopeptidase that cleaves histones N-terminal tails at the carboxyl side of methylated arginine or lysine residues, to generate 'tailless nucleosomes', which may trigger transcription elongation. Preferentially recognizes and cleaves monomethylated and dimethylated arginine residues of histones H2, H3 and H4. After initial cleavage, continues to digest histones tails via its aminopeptidase activity. Additionally, may play a role in protein biosynthesis by modifying the translation machinery. Acts as a Fe(2+) and 2-oxoglutarate-dependent monooxygenase, catalyzing (S)-stereospecific hydroxylation at C-3 of 'Lys-22' of DRG1 and 'Lys-21' of DRG2 translation factors (TRAFAC), promoting their interaction with ribonucleic acids (RNA). The polypeptide is Bifunctional peptidase and (3S)-lysyl hydroxylase JMJD7 (Homo sapiens (Human)).